A 327-amino-acid polypeptide reads, in one-letter code: ATPase ASNA1 homolog (327 aa).

K26–T33 provides a ligand contact to ATP. D57 is a catalytic residue. ATP contacts are provided by E238 and N265. Residues C274 and C277 each coordinate Zn(2+).

Belongs to the arsA ATPase family. In terms of assembly, homodimer.

The protein localises to the cytoplasm. It localises to the endoplasmic reticulum. ATPase required for the post-translational delivery of tail-anchored (TA) proteins to the endoplasmic reticulum. Recognizes and selectively binds the transmembrane domain of TA proteins in the cytosol. This complex then targets to the endoplasmic reticulum by membrane-bound receptors, where the tail-anchored protein is released for insertion. This process is regulated by ATP binding and hydrolysis. ATP binding drives the homodimer towards the closed dimer state, facilitating recognition of newly synthesized TA membrane proteins. ATP hydrolysis is required for insertion. Subsequently, the homodimer reverts towards the open dimer state, lowering its affinity for the membrane-bound receptor, and returning it to the cytosol to initiate a new round of targeting. The polypeptide is ATPase ASNA1 homolog (Entamoeba histolytica (strain ATCC 30459 / HM-1:IMSS / ABRM)).